The chain runs to 265 residues: Methylthioribulose-1-phosphate dehydratase (265 aa).

Cys-118 serves as a coordination point for substrate. Positions 136 and 138 each coordinate Zn(2+). Residue Glu-161 is the Proton donor/acceptor of the active site. His-226 is a Zn(2+) binding site.

It belongs to the aldolase class II family. MtnB subfamily. Zn(2+) serves as cofactor.

Its subcellular location is the cytoplasm. It catalyses the reaction 5-(methylsulfanyl)-D-ribulose 1-phosphate = 5-methylsulfanyl-2,3-dioxopentyl phosphate + H2O. The protein operates within amino-acid biosynthesis; L-methionine biosynthesis via salvage pathway; L-methionine from S-methyl-5-thio-alpha-D-ribose 1-phosphate: step 2/6. Functionally, catalyzes the dehydration of methylthioribulose-1-phosphate (MTRu-1-P) into 2,3-diketo-5-methylthiopentyl-1-phosphate (DK-MTP-1-P). This Scheffersomyces stipitis (strain ATCC 58785 / CBS 6054 / NBRC 10063 / NRRL Y-11545) (Yeast) protein is Methylthioribulose-1-phosphate dehydratase.